The primary structure comprises 421 residues: uncharacterized protein (421 aa).

Lys-249 is modified (N6-(pyridoxal phosphate)lysine).

Belongs to the class-I pyridoxal-phosphate-dependent aminotransferase family. Requires pyridoxal 5'-phosphate as cofactor.

It localises to the cytoplasm. This is an uncharacterized protein from Schizosaccharomyces pombe (strain 972 / ATCC 24843) (Fission yeast).